A 706-amino-acid chain; its full sequence is Fatty acid oxidation complex subunit alpha (706 aa).

The enoyl-CoA hydratase stretch occupies residues 1–188 (MEKTFNLTRR…KMGLVNDVVP (188 aa)). A 3-hydroxyacyl-CoA dehydrogenase region spans residues 308–706 (RKVKKAVILG…TMARENVSFF (399 aa)).

This sequence in the N-terminal section; belongs to the enoyl-CoA hydratase/isomerase family. It in the central section; belongs to the 3-hydroxyacyl-CoA dehydrogenase family. In terms of assembly, heterotetramer of two alpha chains (FadJ) and two beta chains (FadI).

The protein resides in the cytoplasm. The enzyme catalyses a (3S)-3-hydroxyacyl-CoA = a (2E)-enoyl-CoA + H2O. The catalysed reaction is a 4-saturated-(3S)-3-hydroxyacyl-CoA = a (3E)-enoyl-CoA + H2O. It catalyses the reaction a (3S)-3-hydroxyacyl-CoA + NAD(+) = a 3-oxoacyl-CoA + NADH + H(+). It carries out the reaction (3S)-3-hydroxybutanoyl-CoA = (3R)-3-hydroxybutanoyl-CoA. Its pathway is lipid metabolism; fatty acid beta-oxidation. Functionally, catalyzes the formation of a hydroxyacyl-CoA by addition of water on enoyl-CoA. Also exhibits 3-hydroxyacyl-CoA epimerase and 3-hydroxyacyl-CoA dehydrogenase activities. The polypeptide is Fatty acid oxidation complex subunit alpha (Shewanella sp. (strain W3-18-1)).